The sequence spans 114 residues: Iron-sulfur cluster insertion protein ErpA (114 aa).

Residues Cys42, Cys106, and Cys108 each coordinate iron-sulfur cluster.

The protein belongs to the HesB/IscA family. In terms of assembly, homodimer. The cofactor is iron-sulfur cluster.

In terms of biological role, required for insertion of 4Fe-4S clusters for at least IspG. This is Iron-sulfur cluster insertion protein ErpA from Buchnera aphidicola subsp. Acyrthosiphon pisum (strain APS) (Acyrthosiphon pisum symbiotic bacterium).